Here is a 156-residue protein sequence, read N- to C-terminus: Small ribosomal subunit protein uS7 (156 aa).

The protein belongs to the universal ribosomal protein uS7 family. In terms of assembly, part of the 30S ribosomal subunit. Contacts proteins S9 and S11.

Its function is as follows. One of the primary rRNA binding proteins, it binds directly to 16S rRNA where it nucleates assembly of the head domain of the 30S subunit. Is located at the subunit interface close to the decoding center, probably blocks exit of the E-site tRNA. This Rhodobacter capsulatus (Rhodopseudomonas capsulata) protein is Small ribosomal subunit protein uS7.